The chain runs to 394 residues: 1-deoxy-D-xylulose 5-phosphate reductoisomerase (394 aa).

The NADPH site is built by Thr10, Gly11, Ser12, Ile13, Gly38, Arg39, Asn40, and Asn123. Position 124 (Lys124) interacts with 1-deoxy-D-xylulose 5-phosphate. Position 125 (Glu125) interacts with NADPH. Asp149 lines the Mn(2+) pocket. 1-deoxy-D-xylulose 5-phosphate is bound by residues Ser150, Glu151, Ser175, and His198. Glu151 is a Mn(2+) binding site. Gly204 provides a ligand contact to NADPH. Positions 211, 216, 217, and 220 each coordinate 1-deoxy-D-xylulose 5-phosphate. Glu220 is a binding site for Mn(2+).

This sequence belongs to the DXR family. Mg(2+) is required as a cofactor. The cofactor is Mn(2+).

It catalyses the reaction 2-C-methyl-D-erythritol 4-phosphate + NADP(+) = 1-deoxy-D-xylulose 5-phosphate + NADPH + H(+). It participates in isoprenoid biosynthesis; isopentenyl diphosphate biosynthesis via DXP pathway; isopentenyl diphosphate from 1-deoxy-D-xylulose 5-phosphate: step 1/6. Functionally, catalyzes the NADPH-dependent rearrangement and reduction of 1-deoxy-D-xylulose-5-phosphate (DXP) to 2-C-methyl-D-erythritol 4-phosphate (MEP). This Cereibacter sphaeroides (strain KD131 / KCTC 12085) (Rhodobacter sphaeroides) protein is 1-deoxy-D-xylulose 5-phosphate reductoisomerase.